Here is a 556-residue protein sequence, read N- to C-terminus: Glycosyl hydrolase 5 family protein (556 aa).

Residues 1–28 (MTSAGVAPTALRLLTALLLLLVAAPSHS) form the signal peptide. 2 N-linked (GlcNAc...) asparagine glycosylation sites follow: asparagine 102 and asparagine 113. Glutamate 208 acts as the Proton donor/acceptor in catalysis. Residues asparagine 212, asparagine 290, and asparagine 307 are each glycosylated (N-linked (GlcNAc...) asparagine). The active-site Nucleophile is glutamate 473. 2 N-linked (GlcNAc...) asparagine glycosylation sites follow: asparagine 474 and asparagine 479.

It belongs to the glycosyl hydrolase 5 (cellulase A) family. Post-translationally, glycosylated.

Functionally, may have glycosyl hydrolase activity. The protein is Glycosyl hydrolase 5 family protein of Chamaecyparis obtusa (Hinoki false-cypress).